Consider the following 93-residue polypeptide: Co-chaperonin GroES (93 aa).

Belongs to the GroES chaperonin family. In terms of assembly, heptamer of 7 subunits arranged in a ring. Interacts with the chaperonin GroEL.

It is found in the cytoplasm. In terms of biological role, together with the chaperonin GroEL, plays an essential role in assisting protein folding. The GroEL-GroES system forms a nano-cage that allows encapsulation of the non-native substrate proteins and provides a physical environment optimized to promote and accelerate protein folding. GroES binds to the apical surface of the GroEL ring, thereby capping the opening of the GroEL channel. The protein is Co-chaperonin GroES of Streptococcus sanguinis.